The sequence spans 55 residues: Lantibiotic epilancin (55 aa).

Residues Met1–Gln24 constitute a propeptide, cleaved by ElxP. Ser25 is subject to D-lactate; by the dehydratase ElxB and the dehydrogenase ElxO. Residue Ser27 is modified to 2,3-didehydroalanine (Ser); by the dehydratase ElxB. 2,3-didehydrobutyrine; by the dehydratase ElxB is present on Thr31. Position 32 is a 2,3-didehydroalanine (Ser); by the dehydratase ElxB (Ser32). A cross-link (lanthionine (Ser-Cys); by the dehydratase ElxB and the cyclase ElxC) is located at residues Ser36–Cys40. Cross-links (beta-methyllanthionine (Thr-Cys); by the dehydratase ElxB and the cyclase ElxC) lie at residues Thr44–Cys47 and Thr46–Cys49. Residue Thr52 is modified to 2,3-didehydrobutyrine; by the dehydratase ElxB.

Belongs to the type A lantibiotic family. In terms of processing, maturation of this lantibiotic involves the enzymatic conversion of Thr, and Ser into dehydrated AA by ElxB and the formation of thioether bonds with cysteine by the cyclase ElxC. The next steps are cleavage of the leader peptide by ElxP and membrane translocation by ElxT. The leader peptide may be removed before membrane translocation, in contrast to other lantibiotics for which the cleavage occur after translocation. This is suggested by the probable cytoplasmic localization of the serine protease ElxP that cleaves the leader peptide. It is not established whether the 2,3-didehydrobutyrine is the E- or Z-isomer. Post-translationally, the N-terminal D-lactate is probably produced by dehydration of Ser-25 by ElxB, followed by proteolytic removal of the leader peptide by the serine protease ElxP and hydrolysis of the resulting new N-terminal dehydroalanine. This hydrolysis may occur spontaneously. The pyruvate group thus formed is reduced to D-lactate by the NADPH-dependent oxidoreductase ElxO. This N-terminal D-lactate protects the lantibiotic against degradation against aminopeptidase.

In terms of biological role, lanthionine-containing peptide antibiotic (lantibiotic) active on Gram-positive bacteria such as staphylococci, enterococci and streptococci. The bactericidal activity of lantibiotics is based on depolarization of energized bacterial cytoplasmic membranes, initiated by the formation of aqueous transmembrane pores. In Staphylococcus epidermidis, this protein is Lantibiotic epilancin (elkA).